Consider the following 179-residue polypeptide: Adenine phosphoribosyltransferase (179 aa).

It belongs to the purine/pyrimidine phosphoribosyltransferase family. In terms of assembly, homodimer.

The protein localises to the cytoplasm. The enzyme catalyses AMP + diphosphate = 5-phospho-alpha-D-ribose 1-diphosphate + adenine. Its pathway is purine metabolism; AMP biosynthesis via salvage pathway; AMP from adenine: step 1/1. In terms of biological role, catalyzes a salvage reaction resulting in the formation of AMP, that is energically less costly than de novo synthesis. This Mycolicibacterium gilvum (strain PYR-GCK) (Mycobacterium gilvum (strain PYR-GCK)) protein is Adenine phosphoribosyltransferase.